The chain runs to 370 residues: Cytoplasmic dynein intermediate light chain DYN3 (370 aa).

It belongs to the dynein light intermediate chain DYN3 family. As to quaternary structure, the cytoplasmic dynein is composed of at least two heavy chains and a number of intermediate and light chains.

Its subcellular location is the cytoplasm. The protein localises to the cytoskeleton. Functionally, component of the cytoplasmic dynein which acts as a motor for the intracellular retrograde motility of vesicles and organelles along microtubules. May play an important role in the proper orientation of the mitotic spindle into the budding daughter cell yeast. Probably required for normal progression of the cell cycle. The protein is Cytoplasmic dynein intermediate light chain DYN3 (DYN3) of Kluyveromyces lactis (strain ATCC 8585 / CBS 2359 / DSM 70799 / NBRC 1267 / NRRL Y-1140 / WM37) (Yeast).